A 213-amino-acid polypeptide reads, in one-letter code: Heat shock protein 27 (213 aa).

Residues S58 and S75 each carry the phosphoserine modification. Residues 71–182 (SRRASGGPNA…SERIVQIQQT (112 aa)) form the sHSP domain. Residues 157-213 (VLTLKAPPPPSKEQAKSERIVQIQQTGPAHLSVKAPAPEAGDGKAENGSGEKMETSK) are disordered. Basic and acidic residues predominate over residues 197-213 (GDGKAENGSGEKMETSK).

The protein belongs to the small heat shock protein (HSP20) family.

This is Heat shock protein 27 (Hsp27) from Drosophila melanogaster (Fruit fly).